The chain runs to 1888 residues: Zinc finger protein 106 (1888 aa).

Residues 5–29 (RKCILCHIVYGSKKEMDEHMRSMLH) form a C2H2-type 1; atypical zinc finger. A C2H2-type 2; atypical zinc finger spans residues 43–67 (HECRVCRVTEVGLSAYAKHISGQLH). Residues 68–187 (KDNVDAQERE…GPRGSSVWHK (120 aa)) are disordered. Over residues 75–89 (EREDDGKEEEEEEYF) the composition is skewed to acidic residues. Basic and acidic residues-rich tracts occupy residues 90–108 (DKELVQLIQERKEQSRQDE), 118–138 (SDDRQPQWRREDRIPYQDRES), and 150–160 (PQRDWKWEKDG). A Glycyl lysine isopeptide (Lys-Gly) (interchain with G-Cter in SUMO2) cross-link involves residue Lys-91. Residue Lys-155 forms a Glycyl lysine isopeptide (Lys-Gly) (interchain with G-Cter in SUMO2) linkage. Residues 161–175 (FNSTRKNSFPHSLRN) are compositionally biased toward polar residues. Glycyl lysine isopeptide (Lys-Gly) (interchain with G-Cter in SUMO2) cross-links involve residues Lys-265 and Lys-309. 2 disordered regions span residues 287-326 (KKSNKPSKYSQERCKWQRQDRDKAAKYRSPPEGYASDTFP) and 338-362 (RESQTTKQTDTAASKINGKNGTKAR). A compositionally biased stretch (basic and acidic residues) spans 296 to 311 (SQERCKWQRQDRDKAA). Over residues 342-357 (TTKQTDTAASKINGKN) the composition is skewed to polar residues. Glycyl lysine isopeptide (Lys-Gly) (interchain with G-Cter in SUMO2) cross-links involve residues Lys-375, Lys-384, Lys-390, Lys-435, Lys-469, and Lys-479. 2 disordered regions span residues 410-437 (KPVDKTSNPPVIKTQKAGPPGSPSHKAI) and 453-525 (TEQS…TSKS). Positions 481–491 (GPHKQNLKNRS) are enriched in basic residues. Residues 507–525 (LLNTSTLEGSHGSSYTSKS) are compositionally biased toward polar residues. Glycyl lysine isopeptide (Lys-Gly) (interchain with G-Cter in SUMO2) cross-links involve residues Lys-524, Lys-534, and Lys-544. The segment at 537–617 (KTVSGTQKEP…SAMTSDAENH (81 aa)) is disordered. The segment covering 551–572 (NNTSQKAQDTVLQCPKTLQNPL) has biased composition (polar residues). Residue Lys-577 forms a Glycyl lysine isopeptide (Lys-Gly) (interchain with G-Cter in SUMO2) linkage. Positions 577–593 (KRMENDAKESSVEESAK) are enriched in basic and acidic residues. The segment covering 597–613 (SIESQPHSAGNSAMTSD) has biased composition (polar residues). Lys-620 participates in a covalent cross-link: Glycyl lysine isopeptide (Lys-Gly) (interchain with G-Cter in SUMO2). The segment at 635 to 661 (STHTVDKEQGSQIPGTPENLSTSPRNS) is disordered. Residues 644–661 (GSQIPGTPENLSTSPRNS) are compositionally biased toward polar residues. Phosphoserine occurs at positions 657 and 677. Glycyl lysine isopeptide (Lys-Gly) (interchain with G-Cter in SUMO2) cross-links involve residues Lys-687, Lys-700, Lys-721, Lys-738, Lys-758, Lys-792, and Lys-824. A disordered region spans residues 696–728 (NNLVKSDGPFETESFEDTSLDTELQKPDLNNQP). Ser-876, Ser-878, Ser-881, and Ser-909 each carry phosphoserine. Residues 894-920 (TGEGTGKENEAQQSPSPNTALSAAQSQ) are disordered. The span at 904 to 920 (AQQSPSPNTALSAAQSQ) shows a compositional bias: polar residues. Lys-921 is covalently cross-linked (Glycyl lysine isopeptide (Lys-Gly) (interchain with G-Cter in SUMO2)). The residue at position 953 (Ser-953) is a Phosphoserine. The span at 968–986 (ARDLHSQERSTPLSERHAQ) shows a compositional bias: basic and acidic residues. 3 disordered regions span residues 968–1064 (ARDL…ERSQ), 1281–1461 (EQGN…SKKD), and 1468–1487 (QNPIETSRSGCDEVSSTSEL). Residues 992–1008 (GNSLSSNASSGHAVSSL) show a composition bias toward low complexity. Positions 1013–1022 (TDSSCTSGAE) are enriched in polar residues. Phosphothreonine is present on Thr-1036. 3 positions are modified to phosphoserine: Ser-1040, Ser-1041, and Ser-1046. Over residues 1050–1060 (KNKRRKIKGKK) the composition is skewed to basic residues. The span at 1281-1296 (EQGNSRSKGNSPSCQS) shows a compositional bias: polar residues. Phosphoserine occurs at positions 1291, 1293, and 1296. Lys-1310 is covalently cross-linked (Glycyl lysine isopeptide (Lys-Gly) (interchain with G-Cter in SUMO2)). Residues 1312-1321 (SSGSEACSSS) are compositionally biased toward low complexity. Phosphoserine is present on Ser-1313. A Glycyl lysine isopeptide (Lys-Gly) (interchain with G-Cter in SUMO2) cross-link involves residue Lys-1335. Residues 1338 to 1354 (QSPADQPEQQAESTLAS) are compositionally biased toward polar residues. Phosphoserine is present on Ser-1339. Positions 1360–1373 (SKKKKKLRKKKTLR) are enriched in basic residues. The residue at position 1381 (Ser-1381) is a Phosphoserine. Thr-1383 carries the phosphothreonine modification. Residues Lys-1391, Lys-1403, Lys-1406, and Lys-1460 each participate in a glycyl lysine isopeptide (Lys-Gly) (interchain with G-Cter in SUMO2) cross-link. Residues 1450 to 1461 (GDEKPDSPSKKD) show a composition bias toward basic and acidic residues. A compositionally biased stretch (polar residues) spans 1470–1487 (PIETSRSGCDEVSSTSEL). Ser-1474 is subject to Phosphoserine. Residues Lys-1492 and Lys-1509 each participate in a glycyl lysine isopeptide (Lys-Gly) (interchain with G-Cter in SUMO2) cross-link. Residues 1509–1531 (KASKHSSEISSEPGDDEEPTEGS) form a disordered region. WD repeat units follow at residues 1534 to 1573 (GHQAAVNAIQIFGNFLYTCSADTTVRVYNLVSRKCVGVFE), 1575 to 1618 (HTSK…EQLQ), 1659 to 1700 (HGPR…LLRT), 1703 to 1742 (GHSKTVLCMKVVNDLVFSGSSDQSVHAHNIHTGELVRIYK), 1743 to 1780 (GHNHAVTVVNILGKVMVTACLDKFVRVYELQSHDRLQV), and 1783 to 1820 (GHKDMIMCMTIHKSVIYTGCYDGSIQAVRLNLMQNYRC). A Glycyl lysine isopeptide (Lys-Gly) (interchain with G-Cter in SUMO2) cross-link involves residue Lys-1590. Residue Lys-1742 forms a Glycyl lysine isopeptide (Lys-Gly) (interchain with G-Cter in SUMO2) linkage. The C2H2-type 3; atypical zinc finger occupies 1818-1843 (YRCWWYGCTLIFGVVDHLKQHLLTDH). Lys-1869 is covalently cross-linked (Glycyl lysine isopeptide (Lys-Gly) (interchain with G-Cter in SUMO2)).

As to quaternary structure, interacts with KNOP1. Interacts with TARDBP and NUP107. Interacts (via N-terminus) with RBM39. Interacts with the SH3 domains of FYN and GRB2. Phosphorylated by FYN in vitro. In terms of tissue distribution, widely expressed, with strongest expression in skeletal muscle, heart and brain (at protein level). Detected in spinal cord motor neurons.

It is found in the nucleus. The protein resides in the nucleolus. The protein localises to the nucleus speckle. Functionally, RNA-binding protein. Specifically binds to 5'-GGGGCC-3' sequence repeats in RNA. Essential for maintenance of peripheral motor neuron and skeletal muscle function. Required for normal expression and/or alternative splicing of a number of genes in spinal cord and skeletal muscle, including the neurite outgrowth inhibitor RTN4. Also contributes to normal mitochondrial respiratory function in motor neurons, via an unknown mechanism. In Mus musculus (Mouse), this protein is Zinc finger protein 106 (Znf106).